We begin with the raw amino-acid sequence, 355 residues long: Protein RecA (355 aa).

66-73 contributes to the ATP binding site; that stretch reads GPESSGKT. The tract at residues 331 to 355 is disordered; that stretch reads DVPEEDLPTTEDEQINILPDDSTEE. Residues 332-344 are compositionally biased toward acidic residues; the sequence is VPEEDLPTTEDEQ.

Belongs to the RecA family.

It localises to the cytoplasm. Functionally, can catalyze the hydrolysis of ATP in the presence of single-stranded DNA, the ATP-dependent uptake of single-stranded DNA by duplex DNA, and the ATP-dependent hybridization of homologous single-stranded DNAs. It interacts with LexA causing its activation and leading to its autocatalytic cleavage. The protein is Protein RecA of Latilactobacillus sakei subsp. sakei (strain 23K) (Lactobacillus sakei subsp. sakei).